Reading from the N-terminus, the 53-residue chain is Small ribosomal subunit protein uS14 (53 aa).

Zn(2+) is bound by residues cysteine 18, cysteine 21, cysteine 36, and cysteine 39.

The protein belongs to the universal ribosomal protein uS14 family. Zinc-binding uS14 subfamily. Part of the 30S ribosomal subunit. The cofactor is Zn(2+).

Binds 16S rRNA, required for the assembly of 30S particles. This is Small ribosomal subunit protein uS14 from Thermoplasma volcanium (strain ATCC 51530 / DSM 4299 / JCM 9571 / NBRC 15438 / GSS1).